The sequence spans 141 residues: HTH-type transcriptional repressor NsrR (141 aa).

The region spanning 2 to 129 is the HTH rrf2-type domain; the sequence is QLTSFTDYAL…DDCTIEELLS (128 aa). Residues 28–51 constitute a DNA-binding region (H-T-H motif); the sequence is ITEVTDLFGVSRNHMVKVINRLGQ. Residues cysteine 91, cysteine 96, and cysteine 102 each contribute to the [2Fe-2S] cluster site.

Requires [2Fe-2S] cluster as cofactor.

Nitric oxide-sensitive repressor of genes involved in protecting the cell against nitrosative stress. May require iron for activity. The sequence is that of HTH-type transcriptional repressor NsrR from Vibrio campbellii (strain ATCC BAA-1116).